The sequence spans 627 residues: Hemocyanin B chain (627 aa).

His173, His177, and His204 together coordinate Cu cation. 2 N-linked (GlcNAc...) asparagine glycosylation sites follow: Asn312 and Asn316. Residues His324, His328, and His364 each coordinate Cu cation. A disulfide bridge links Cys534 with Cys582.

This sequence belongs to the tyrosinase family. Hemocyanin subfamily. Tarantula hemocyanin is a 24-chain polymer with seven different chains identified. Hemolymph.

It localises to the secreted. Its subcellular location is the extracellular space. Hemocyanins are copper-containing oxygen carriers occurring freely dissolved in the hemolymph of many mollusks and arthropods. The polypeptide is Hemocyanin B chain (HCB) (Aphonopelma sp. (American tarantula)).